The chain runs to 948 residues: Probable disease resistance protein At5g47260 (948 aa).

Residues 20-57 adopt a coiled-coil conformation; sequence RKYLYNLERNLEALHKVMQDLNAMRNDLLKRLSKEEEI. In terms of domain architecture, NB-ARC spans 134-432; sequence HRALPPLVIK…CEGILAKEDR (299 aa). 176-183 contributes to the ATP binding site; sequence GRGGVGKT. LRR repeat units follow at residues 498–519, 520–542, 545–567, 569–591, 592–614, 615–636, 640–661, 666–686, and 690–711; these read MIRR…PQCS, ELTT…FFQW, GLVV…VSSL, LLRF…KELK, SLIH…ASLL, NLQV…EDIQ, SLKE…LSIQ, SIRR…LSLN, and SLCE…WRCT.

The protein belongs to the disease resistance NB-LRR family.

Functionally, potential disease resistance protein. In Arabidopsis thaliana (Mouse-ear cress), this protein is Probable disease resistance protein At5g47260.